The following is a 180-amino-acid chain: Ribonuclease M5 (180 aa).

The 86-residue stretch at 5–90 folds into the Toprim domain; the sequence is KQIIIVEGKT…NAFIKKDDIS (86 aa). Positions 11, 59, and 61 each coordinate Mg(2+).

Belongs to the ribonuclease M5 family. Mg(2+) serves as cofactor.

The protein localises to the cytoplasm. It catalyses the reaction Endonucleolytic cleavage of RNA, removing 21 and 42 nucleotides, respectively, from the 5'- and 3'-termini of a 5S-rRNA precursor.. In terms of biological role, required for correct processing of both the 5' and 3' ends of 5S rRNA precursor. Cleaves both sides of a double-stranded region yielding mature 5S rRNA in one step. This Mycoplasma capricolum subsp. capricolum (strain California kid / ATCC 27343 / NCTC 10154) protein is Ribonuclease M5.